The following is a 261-amino-acid chain: uncharacterized protein (261 aa).

The span at 1–12 (MSRTSSQNQEII) shows a compositional bias: polar residues. Positions 1 to 139 (MSRTSSQNQE…KELDTINKKT (139 aa)) are disordered. Positions 23-55 (SSKPSKSSKPSKSSKPSKSSKTSKSSRSSGSKS) are enriched in low complexity. The span at 65–74 (SRKDKYKEEY) shows a compositional bias: basic and acidic residues. Positions 79–108 (YPDEQEYEQEYEQEYEQEYQDNGEQTEEFV) are enriched in acidic residues. Residues 122–139 (DERQTQSNKELDTINKKT) show a composition bias toward basic and acidic residues. 2 coiled-coil regions span residues 151–181 (MDHD…IIKL) and 218–243 (EDII…KKIE).

This is an uncharacterized protein from Acanthamoeba polyphaga (Amoeba).